Consider the following 420-residue polypeptide: D-tagatose-1,6-bisphosphate aldolase subunit GatZ (420 aa).

Belongs to the GatZ/KbaZ family. GatZ subfamily. In terms of assembly, forms a complex with GatY.

Its pathway is carbohydrate metabolism; D-tagatose 6-phosphate degradation; D-glyceraldehyde 3-phosphate and glycerone phosphate from D-tagatose 6-phosphate: step 2/2. Functionally, component of the tagatose-1,6-bisphosphate aldolase GatYZ that is required for full activity and stability of the Y subunit. Could have a chaperone-like function for the proper and stable folding of GatY. When expressed alone, GatZ does not show any aldolase activity. Is involved in the catabolism of galactitol. The chain is D-tagatose-1,6-bisphosphate aldolase subunit GatZ from Shigella flexneri serotype 5b (strain 8401).